A 355-amino-acid polypeptide reads, in one-letter code: Fructose-1,6-bisphosphatase (355 aa).

Residues 25–30 (ILDQQH) and 37–41 (TGEFS) contribute to the AMP site. Residues Asp-78 and Glu-107 each coordinate Mg(2+). 121-122 (KY) is an AMP binding site. 3 residues coordinate Mg(2+): Asp-127, Ile-129, and Asp-130. 130-133 (DGSS) contacts substrate. Lys-149 contacts AMP. Substrate-binding positions include 230–233 (NEGN), 263–268 (RYIGSM), Tyr-284, and 294–296 (KLR). A Mg(2+)-binding site is contributed by Glu-300.

This sequence belongs to the FBPase class 1 family. In terms of assembly, homotetramer. The cofactor is Mg(2+).

It carries out the reaction beta-D-fructose 1,6-bisphosphate + H2O = beta-D-fructose 6-phosphate + phosphate. It functions in the pathway carbohydrate biosynthesis; gluconeogenesis. Its activity is regulated as follows. Subject to complex allosteric regulation. The enzyme can assume an active R-state, or an inactive T-state. Intermediate conformations may exist. AMP acts as allosteric inhibitor. AMP binding affects the turnover of bound substrate and not the affinity for substrate. The protein is Fructose-1,6-bisphosphatase (FBP1) of Kluyveromyces lactis (strain ATCC 8585 / CBS 2359 / DSM 70799 / NBRC 1267 / NRRL Y-1140 / WM37) (Yeast).